We begin with the raw amino-acid sequence, 282 residues long: Rhomboid protease GlpG (282 aa).

6 helical membrane passes run 96 to 116 (AGPL…WMQF), 144 to 164 (GLLH…WYLG), 176 to 196 (LFVI…LFSG), 197 to 217 (SHFG…WLTG), 225 to 242 (IGVP…LIVG), and 247 to 269 (FGLS…MALW). The active-site Nucleophile is the Ser-203. Residue His-256 is part of the active site.

Belongs to the peptidase S54 family.

The protein resides in the cell inner membrane. The enzyme catalyses Cleaves type-1 transmembrane domains using a catalytic dyad composed of serine and histidine that are contributed by different transmembrane domains.. In terms of biological role, rhomboid-type serine protease that catalyzes intramembrane proteolysis. In Photorhabdus laumondii subsp. laumondii (strain DSM 15139 / CIP 105565 / TT01) (Photorhabdus luminescens subsp. laumondii), this protein is Rhomboid protease GlpG.